Reading from the N-terminus, the 337-residue chain is Major outer membrane protein P.IB (337 aa).

Residues 1–19 (MKKSLIALTLAALPVAAMA) form the signal peptide.

The protein belongs to the Gram-negative porin family. In terms of assembly, homotrimer.

It localises to the cell outer membrane. Serves as a slightly cation selective porin. The sequence is that of Major outer membrane protein P.IB (por) from Neisseria lactamica.